A 131-amino-acid chain; its full sequence is Peptide methionine sulfoxide reductase MsrB (131 aa).

A MsrB domain is found at 8-130 (LDEWRSMLDP…NSVCIDLRPR (123 aa)). Positions 47, 50, 96, and 99 each coordinate Zn(2+). Cysteine 119 functions as the Nucleophile in the catalytic mechanism.

It belongs to the MsrB Met sulfoxide reductase family. Zn(2+) is required as a cofactor.

It catalyses the reaction L-methionyl-[protein] + [thioredoxin]-disulfide + H2O = L-methionyl-(R)-S-oxide-[protein] + [thioredoxin]-dithiol. This Pseudomonas putida (strain GB-1) protein is Peptide methionine sulfoxide reductase MsrB.